Consider the following 476-residue polypeptide: RuvB-like helicase 2 (476 aa).

Glycine 76–threonine 83 contacts ATP.

It belongs to the RuvB family. In terms of assembly, may form heterododecamers with RVB1. Component of the SWR1 chromatin remodeling complex, the INO80 chromatin remodeling complex, and of the R2TP complex.

It is found in the nucleus. The enzyme catalyses ATP + H2O = ADP + phosphate + H(+). DNA helicase which participates in several chromatin remodeling complexes, including the SWR1 and the INO80 complexes. The SWR1 complex mediates the ATP-dependent exchange of histone H2A for the H2A variant HZT1 leading to transcriptional regulation of selected genes by chromatin remodeling. The INO80 complex remodels chromatin by shifting nucleosomes and is involved in DNA repair. Also involved in pre-rRNA processing. This is RuvB-like helicase 2 (RVB2) from Candida glabrata (strain ATCC 2001 / BCRC 20586 / JCM 3761 / NBRC 0622 / NRRL Y-65 / CBS 138) (Yeast).